Reading from the N-terminus, the 241-residue chain is HTH-type quorum-sensing regulator RhlR (241 aa).

An HTH luxR-type domain is found at 174-239 (LMSNPVCLSH…LAAAYAAALG (66 aa)). The H-T-H motif DNA-binding region spans 198–217 (SGEIAIILSISESTVNFHHK).

This sequence belongs to the autoinducer-regulated transcriptional regulatory protein family. As to quaternary structure, homodimer in the absence of any acyl-L-homoserine lactone. The presence of the autoinducer C4-HSL has no significant effect on dimerization whereas N-(3-oxododecanoyl)-L-homoserine lactone (3O-C12-HSL), the LasR inducer, is able to dissociate the RhlR homodimers into monomers.

The protein resides in the cytoplasm. Its activity is regulated as follows. Activated by interaction with the autoinducer signal molecule N-butanoyl-L-homoserine lactone (C4-HSL or BHL), the product of the RhlI synthase. Is also activated by binding to rosmarinic acid (RA), a homoserine lactone mimic produced by plants, which induces a broad quorum sensing response, including the induction of all major quorum sensing controlled virulence factors. Rosmarinic acid secretion may be a plant defense mechanism to stimulate a premature quorum sensing response. Quorum-sensing regulator that controls the expression of multiple virulence factors in response to extracellular signaling molecules called autoinducers. Involved, among others, in the transcriptional regulation of genes that are responsible for rhamnolipid surfactant biosynthesis. Acts by binding to a specific sequence in the rhlAB regulatory region, both in the presence and in the absence of its autoinducer. In the former case it activates transcription of the promoter, whereas in the latter it acts as a transcriptional repressor. Also regulates the expression of the rmlBDAC operon, encoding dTDP-L-rhamnose biosynthetic enzymes, by binding to the rml box in the promoter region. In addition, is involved in the regulation of the production of elastase (lasB) and pyocyanine. This is HTH-type quorum-sensing regulator RhlR from Pseudomonas aeruginosa (strain ATCC 15692 / DSM 22644 / CIP 104116 / JCM 14847 / LMG 12228 / 1C / PRS 101 / PAO1).